The chain runs to 709 residues: Protein SOSEKI 3 (709 aa).

The segment at 8 to 101 (SSVQVLYQLS…YVLRASELFD (94 aa)) is DIX-like oligomerization domain. Disordered stretches follow at residues 242-266 (LHTP…AKRM), 315-344 (RDGR…AEQS), 358-393 (GGSS…KTPC), 411-439 (PSPA…NRPS), and 506-560 (DSPT…DTKP). Positions 329–342 (ELREVQNEKEKEAE) are enriched in basic and acidic residues. The span at 417–436 (NKAHSSLDRQEIPPQEECKN) shows a compositional bias: basic and acidic residues. Polar residues predominate over residues 529 to 544 (VKTSNSLPRVKTTTSP). The segment at 663 to 692 (ILQECSTCGRTFKPDSLQVHMRGCHPPQYA) adopts a C2HC/C3H-type zinc-finger fold. Residues Cys667, Cys670, His682, and Cys686 each coordinate Zn(2+).

Belongs to the SOSEKI family. Homodimer. Forms long polymer filaments with other SOKs proteins polymers crucial for polar localization and biological activity. It depends on Zn(2+) as a cofactor.

The protein localises to the cell membrane. Functionally, SOSEKI proteins locally interpret global polarity cues and can influence cell division orientation to coordinate cell polarization relative to body axes. The protein is Protein SOSEKI 3 of Physcomitrium patens (Spreading-leaved earth moss).